The following is a 251-amino-acid chain: Triosephosphate isomerase (251 aa).

9–11 (NWK) lines the substrate pocket. His95 functions as the Electrophile in the catalytic mechanism. Glu167 (proton acceptor) is an active-site residue. Residues Gly173, Ser213, and 234–235 (GG) contribute to the substrate site. Ser213 carries the post-translational modification Phosphoserine.

It belongs to the triosephosphate isomerase family. As to quaternary structure, homodimer.

The protein resides in the cytoplasm. It carries out the reaction D-glyceraldehyde 3-phosphate = dihydroxyacetone phosphate. It participates in carbohydrate biosynthesis; gluconeogenesis. It functions in the pathway carbohydrate degradation; glycolysis; D-glyceraldehyde 3-phosphate from glycerone phosphate: step 1/1. Involved in the gluconeogenesis. Catalyzes stereospecifically the conversion of dihydroxyacetone phosphate (DHAP) to D-glyceraldehyde-3-phosphate (G3P). This Anoxybacillus flavithermus (strain DSM 21510 / WK1) protein is Triosephosphate isomerase.